Consider the following 276-residue polypeptide: Putative respiratory nitrate reductase heme subunit ORF7 (276 aa).

Heme b-binding residues include Met-138 and Lys-228.

Probable multiprotein complex; a catalytic heterodimer of an alpha and beta chain is proposed to associate with additional subunits involved in membrane attachment and electron transfer. Requires heme b as cofactor.

It is found in the cell membrane. The respiratory membrane-bound nitrate reductase enzyme complex plays a role in generation of metabolic energy by using nitrate as a terminal electron acceptor during anaerobic conditions. May transfer electrons to the iron-sulfur centers of the catalytic beta subunit. This chain is Putative respiratory nitrate reductase heme subunit ORF7, found in Haloferax mediterranei (strain ATCC 33500 / DSM 1411 / JCM 8866 / NBRC 14739 / NCIMB 2177 / R-4) (Halobacterium mediterranei).